A 250-amino-acid polypeptide reads, in one-letter code: MFEGPLQDVIDEFSRLPGIGPKSAQRIALHLLNEEPEDIERFQSALGRLQRGVTFCRICHNISQEDVCRICADSNRDKSIICVVEESKDIQVIERTAEYRGRYHVLGGALDPLNGIGPKELNVTPLVQRIGGALPDVALGAKGGGASLGDADTPADGESSGADAAETGNAKTAAVETDVEYDEAPEITEVIIATDPNTEGEATASYLGRLLRDFPGLTVTRLASGIPMGGDLEFVDELTLSRAFAGRTAL.

A C4-type zinc finger spans residues 56 to 71 (CRICHNISQEDVCRIC). The Toprim domain maps to 79–227 (SIICVVEESK…TVTRLASGIP (149 aa)). Residues 148-172 (LGDADTPADGESSGADAAETGNAKT) are disordered.

This sequence belongs to the RecR family.

Its function is as follows. May play a role in DNA repair. It seems to be involved in an RecBC-independent recombinational process of DNA repair. It may act with RecF and RecO. This is Recombination protein RecR from Corynebacterium jeikeium (strain K411).